The chain runs to 710 residues: Interferon-induced GTP-binding protein Mx2 (710 aa).

A disordered region spans residues 1–51; it reads MSMSFRPLKYKRHTQTSTQHHPKQDIYFHQQPPGPPLGQTMSPPQWQVEES. Positions 39–50 are enriched in polar residues; sequence QTMSPPQWQVEE. The 272-residue stretch at 112 to 383 folds into the Dynamin-type G domain; the sequence is DLALPAIAVI…LIWHINKSLP (272 aa). The G1 motif stretch occupies residues 122–129; that stretch reads GDQSSGKS. GTP is bound at residue 122–129; sequence GDQSSGKS. The G2 motif stretch occupies residues 147–149; sequence ITR. Positions 221 to 224 are G3 motif; it reads DLPG. GTP-binding positions include 221-225 and 290-293; these read DLPGI and TKPD. Residues 290–293 form a G4 motif region; sequence TKPD. Residues 322–325 are G5 motif; the sequence is KCRG. The GED domain maps to 619-710; sequence IVEIGVHLNA…ALYEFPHFKG (92 aa).

This sequence belongs to the TRAFAC class dynamin-like GTPase superfamily. Dynamin/Fzo/YdjA family.

The protein localises to the cytoplasm. It is found in the nucleus. Functionally, interferon-induced dynamin-like GTPase with antiviral activity against vesicular stomatitis virus (VSV). This Bos taurus (Bovine) protein is Interferon-induced GTP-binding protein Mx2 (MX2).